The following is a 354-amino-acid chain: uncharacterized protein (354 aa).

This sequence belongs to the asfivirus B354L family.

This is an uncharacterized protein from African swine fever virus (isolate Tick/South Africa/Pretoriuskop Pr4/1996) (ASFV).